The chain runs to 1200 residues: Nuclear pore complex protein Nup133 (1200 aa).

The interval 1-28 (MERNLQKQLYGISRESSPGARRYSMPAA) is disordered.

It belongs to the nucleoporin Nup133 family. As to quaternary structure, forms part of the Nup107-Nup160 subcomplex in the nuclear pore.

The protein resides in the nucleus. Its subcellular location is the nuclear pore complex. In terms of biological role, probable component of the nuclear pore complex (NPC). Plays a role in NPC assembly and/or maintenance. The sequence is that of Nuclear pore complex protein Nup133 from Drosophila melanogaster (Fruit fly).